The following is a 201-amino-acid chain: dITP/XTP pyrophosphatase (201 aa).

8–13 (TTNENK) is a substrate binding site. Asp68 functions as the Proton acceptor in the catalytic mechanism. Asp68 contributes to the Mg(2+) binding site. Residues Ser69, 155–158 (FGYD), Lys177, and 182–183 (HR) each bind substrate.

This sequence belongs to the HAM1 NTPase family. In terms of assembly, homodimer. Mg(2+) is required as a cofactor.

It carries out the reaction XTP + H2O = XMP + diphosphate + H(+). It catalyses the reaction dITP + H2O = dIMP + diphosphate + H(+). The catalysed reaction is ITP + H2O = IMP + diphosphate + H(+). Pyrophosphatase that catalyzes the hydrolysis of nucleoside triphosphates to their monophosphate derivatives, with a high preference for the non-canonical purine nucleotides XTP (xanthosine triphosphate), dITP (deoxyinosine triphosphate) and ITP. Seems to function as a house-cleaning enzyme that removes non-canonical purine nucleotides from the nucleotide pool, thus preventing their incorporation into DNA/RNA and avoiding chromosomal lesions. This chain is dITP/XTP pyrophosphatase, found in Borreliella burgdorferi (strain ATCC 35210 / DSM 4680 / CIP 102532 / B31) (Borrelia burgdorferi).